A 556-amino-acid chain; its full sequence is Dihydroxy-acid dehydratase (556 aa).

D78 is a Mg(2+) binding site. C119 is a [2Fe-2S] cluster binding site. Residues D120 and K121 each coordinate Mg(2+). At K121 the chain carries N6-carboxylysine. A [2Fe-2S] cluster-binding site is contributed by C191. E442 serves as a coordination point for Mg(2+). Catalysis depends on S468, which acts as the Proton acceptor.

It belongs to the IlvD/Edd family. Homodimer. [2Fe-2S] cluster serves as cofactor. Mg(2+) is required as a cofactor.

It carries out the reaction (2R)-2,3-dihydroxy-3-methylbutanoate = 3-methyl-2-oxobutanoate + H2O. It catalyses the reaction (2R,3R)-2,3-dihydroxy-3-methylpentanoate = (S)-3-methyl-2-oxopentanoate + H2O. It participates in amino-acid biosynthesis; L-isoleucine biosynthesis; L-isoleucine from 2-oxobutanoate: step 3/4. The protein operates within amino-acid biosynthesis; L-valine biosynthesis; L-valine from pyruvate: step 3/4. Functions in the biosynthesis of branched-chain amino acids. Catalyzes the dehydration of (2R,3R)-2,3-dihydroxy-3-methylpentanoate (2,3-dihydroxy-3-methylvalerate) into 2-oxo-3-methylpentanoate (2-oxo-3-methylvalerate) and of (2R)-2,3-dihydroxy-3-methylbutanoate (2,3-dihydroxyisovalerate) into 2-oxo-3-methylbutanoate (2-oxoisovalerate), the penultimate precursor to L-isoleucine and L-valine, respectively. This chain is Dihydroxy-acid dehydratase, found in Clostridium kluyveri (strain NBRC 12016).